The primary structure comprises 1062 residues: Carbamoyl phosphate synthase large chain (1062 aa).

The segment at 1–401 (MPKRTDIHKI…AMQKAVQSLE (401 aa)) is carboxyphosphate synthetic domain. Positions 129, 169, 175, 176, 208, 210, 215, 241, 242, 243, 284, and 298 each coordinate ATP. In terms of domain architecture, ATP-grasp 1 spans 133 to 327 (KELCQKLGEP…IAKMAAKIAI (195 aa)). Mg(2+)-binding residues include Gln284, Glu298, and Asn300. The Mn(2+) site is built by Gln284, Glu298, and Asn300. An oligomerization domain region spans residues 402 to 546 (IDEKDLYSAK…YSTYDGENES (145 aa)). The tract at residues 547–929 (RKSGKKSVIV…ALYKAFAGAK (383 aa)) is carbamoyl phosphate synthetic domain. The ATP-grasp 2 domain occupies 671–861 (DQIIKSLHLH…MAQVATRVIM (191 aa)). The ATP site is built by Arg707, Asp746, Leu748, Glu752, Gly777, Val778, His779, Ser780, Gln820, and Glu832. Mg(2+) contacts are provided by Gln820, Glu832, and Asn834. Mn(2+)-binding residues include Gln820, Glu832, and Asn834. The 133-residue stretch at 930-1062 (MQLPENGNVL…NRSFATDALK (133 aa)) folds into the MGS-like domain. Residues 930–1062 (MQLPENGNVL…NRSFATDALK (133 aa)) form an allosteric domain region.

This sequence belongs to the CarB family. Composed of two chains; the small (or glutamine) chain promotes the hydrolysis of glutamine to ammonia, which is used by the large (or ammonia) chain to synthesize carbamoyl phosphate. Tetramer of heterodimers (alpha,beta)4. Mg(2+) serves as cofactor. Requires Mn(2+) as cofactor.

The enzyme catalyses hydrogencarbonate + L-glutamine + 2 ATP + H2O = carbamoyl phosphate + L-glutamate + 2 ADP + phosphate + 2 H(+). The catalysed reaction is hydrogencarbonate + NH4(+) + 2 ATP = carbamoyl phosphate + 2 ADP + phosphate + 2 H(+). It functions in the pathway amino-acid biosynthesis; L-arginine biosynthesis; carbamoyl phosphate from bicarbonate: step 1/1. Its pathway is pyrimidine metabolism; UMP biosynthesis via de novo pathway; (S)-dihydroorotate from bicarbonate: step 1/3. In terms of biological role, large subunit of the glutamine-dependent carbamoyl phosphate synthetase (CPSase). CPSase catalyzes the formation of carbamoyl phosphate from the ammonia moiety of glutamine, carbonate, and phosphate donated by ATP, constituting the first step of 2 biosynthetic pathways, one leading to arginine and/or urea and the other to pyrimidine nucleotides. The large subunit (synthetase) binds the substrates ammonia (free or transferred from glutamine from the small subunit), hydrogencarbonate and ATP and carries out an ATP-coupled ligase reaction, activating hydrogencarbonate by forming carboxy phosphate which reacts with ammonia to form carbamoyl phosphate. The chain is Carbamoyl phosphate synthase large chain from Lactobacillus delbrueckii subsp. bulgaricus (strain ATCC BAA-365 / Lb-18).